A 214-amino-acid polypeptide reads, in one-letter code: MGWIRDRRSPSSMEIRELHNRDVINRGAFKSRQKRTQTLITSKCGENPSPFFLARSIAIAMGIRFIVMVMIYSGMIINLLFNQEAPSPLKESYCGPCPKNWICYRNSCYQFSNESKTWLQSQASCRSQNSSLLKIYSREDQDFFKLVKSYHWMGLVQIPTNRSWQWEDGSILSPNQITMVEMQNGSCAVYGSSFKGYTENCLTLNTYICMKRTV.

Topologically, residues 1-56 (MGWIRDRRSPSSMEIRELHNRDVINRGAFKSRQKRTQTLITSKCGENPSPFFLARS) are cytoplasmic. Residues 57 to 77 (IAIAMGIRFIVMVMIYSGMII) traverse the membrane as a helical; Signal-anchor for type II membrane protein segment. Residues 78-214 (NLLFNQEAPS…NTYICMKRTV (137 aa)) are Extracellular-facing. Disulfide bonds link C94–C103 and C97–C108. The 113-residue stretch at 98-210 (PKNWICYRNS…CLTLNTYICM (113 aa)) folds into the C-type lectin domain. N-linked (GlcNAc...) asparagine glycans are attached at residues N113, N129, N161, and N184. 2 disulfides stabilise this stretch: C125–C209 and C187–C201.

Homodimer; disulfide-linked. Heterohexamer composed of two subunits of KLRK1 and four subunits of HCST/DAP10. Interacts (via transmembrane domain) with HCST/DAP10 (via transmembrane domain); the interaction is required for KLRK1 NK cell surface and induces NK cell-mediated cytotoxicity. Can form disulfide-bonded heterodimer with CD94. Interacts with CEACAM1; recruits PTPN6 that dephosphorylates VAV1. Detected in peripheral blood leukocytes, macrophages, monocytes and natural killer cells.

It is found in the cell membrane. Its function is as follows. Functions as an activating and costimulatory receptor involved in immunosurveillance upon binding to various cellular stress-inducible ligands displayed at the surface of autologous tumor cells and virus-infected cells. Provides both stimulatory and costimulatory innate immune responses on activated killer (NK) cells, leading to cytotoxic activity. Acts as a costimulatory receptor for T-cell receptor (TCR) in CD8(+) T-cell-mediated adaptive immune responses by amplifying T-cell activation. Stimulates perforin-mediated elimination of ligand-expressing tumor cells. Signaling involves calcium influx, culminating in the expression of TNF-alpha. Participates in NK cell-mediated bone marrow graft rejection. May play a regulatory role in differentiation and survival of NK cells. Binds to ligands belonging to various subfamilies of MHC class I-related glycoproteins. This is NKG2-D type II integral membrane protein (KLRK1) from Sus scrofa (Pig).